Consider the following 507-residue polypeptide: Transcription factor CP2 (507 aa).

Residues Glu61–Ser300 enclose the Grh/CP2 DB domain. Residues Glu133 to Val395 form a DNA-binding region. Disordered regions lie at residues Pro240 to Ser268 and Ser296 to Pro316. Residues Lys241 to Tyr265 are compositionally biased toward basic and acidic residues.

The protein belongs to the grh/CP2 family. CP2 subfamily. In terms of assembly, component of the SSP (stage selector protein) complex, which appears to be a heteromer of TFCP2 and 2 copies of NFE4.

It localises to the nucleus. Functionally, may function as a transcription factor. In Xenopus tropicalis (Western clawed frog), this protein is Transcription factor CP2 (tfcp2).